The sequence spans 263 residues: 3-methyl-2-oxobutanoate hydroxymethyltransferase (263 aa).

The Mg(2+) site is built by D45 and D84. Residues 45–46 (DS), D84, and K112 each bind 3-methyl-2-oxobutanoate. Position 114 (E114) interacts with Mg(2+). E180 functions as the Proton acceptor in the catalytic mechanism.

Belongs to the PanB family. In terms of assembly, homodecamer; pentamer of dimers. Mg(2+) is required as a cofactor.

Its subcellular location is the cytoplasm. The enzyme catalyses 3-methyl-2-oxobutanoate + (6R)-5,10-methylene-5,6,7,8-tetrahydrofolate + H2O = 2-dehydropantoate + (6S)-5,6,7,8-tetrahydrofolate. The protein operates within cofactor biosynthesis; (R)-pantothenate biosynthesis; (R)-pantoate from 3-methyl-2-oxobutanoate: step 1/2. In terms of biological role, catalyzes the reversible reaction in which hydroxymethyl group from 5,10-methylenetetrahydrofolate is transferred onto alpha-ketoisovalerate to form ketopantoate. This Salmonella agona (strain SL483) protein is 3-methyl-2-oxobutanoate hydroxymethyltransferase.